A 485-amino-acid chain; its full sequence is UDP-N-acetylmuramate--L-alanine ligase (485 aa).

120–126 (GSHGKTT) lines the ATP pocket.

It belongs to the MurCDEF family.

It is found in the cytoplasm. The enzyme catalyses UDP-N-acetyl-alpha-D-muramate + L-alanine + ATP = UDP-N-acetyl-alpha-D-muramoyl-L-alanine + ADP + phosphate + H(+). It participates in cell wall biogenesis; peptidoglycan biosynthesis. Functionally, cell wall formation. This Rickettsia africae (strain ESF-5) protein is UDP-N-acetylmuramate--L-alanine ligase.